The primary structure comprises 24 residues: Tryptophanase operon leader peptide (24 aa).

This is Tryptophanase operon leader peptide (tnaL) from Escherichia coli O157:H7.